Consider the following 300-residue polypeptide: N-acetylmuramic acid 6-phosphate etherase 2 (300 aa).

The SIS domain occupies 57–220 (ITAAFANGGR…TTGAMIRSGK (164 aa)). Glu85 acts as the Proton donor in catalysis. Glu116 is an active-site residue.

Belongs to the GCKR-like family. MurNAc-6-P etherase subfamily. Homodimer.

It carries out the reaction N-acetyl-D-muramate 6-phosphate + H2O = N-acetyl-D-glucosamine 6-phosphate + (R)-lactate. It participates in amino-sugar metabolism; 1,6-anhydro-N-acetylmuramate degradation. It functions in the pathway amino-sugar metabolism; N-acetylmuramate degradation. Its pathway is cell wall biogenesis; peptidoglycan recycling. Specifically catalyzes the cleavage of the D-lactyl ether substituent of MurNAc 6-phosphate, producing GlcNAc 6-phosphate and D-lactate. Together with AnmK, is also required for the utilization of anhydro-N-acetylmuramic acid (anhMurNAc) either imported from the medium or derived from its own cell wall murein, and thus plays a role in cell wall recycling. The polypeptide is N-acetylmuramic acid 6-phosphate etherase 2 (Vibrio parahaemolyticus serotype O3:K6 (strain RIMD 2210633)).